Reading from the N-terminus, the 149-residue chain is Large ribosomal subunit protein bL9 (149 aa).

Belongs to the bacterial ribosomal protein bL9 family.

Functionally, binds to the 23S rRNA. The chain is Large ribosomal subunit protein bL9 from Endomicrobium trichonymphae.